A 695-amino-acid chain; its full sequence is DNA ligase (695 aa).

NAD(+) is bound by residues D44–D48, S93–L94, and E123. The active-site N6-AMP-lysine intermediate is the K125. 4 residues coordinate NAD(+): R146, E184, K300, and K324. Residues C418, C421, C436, and C442 each contribute to the Zn(2+) site. The region spanning S605–R694 is the BRCT domain.

Belongs to the NAD-dependent DNA ligase family. LigA subfamily. Mg(2+) serves as cofactor. Requires Mn(2+) as cofactor.

It carries out the reaction NAD(+) + (deoxyribonucleotide)n-3'-hydroxyl + 5'-phospho-(deoxyribonucleotide)m = (deoxyribonucleotide)n+m + AMP + beta-nicotinamide D-nucleotide.. Functionally, DNA ligase that catalyzes the formation of phosphodiester linkages between 5'-phosphoryl and 3'-hydroxyl groups in double-stranded DNA using NAD as a coenzyme and as the energy source for the reaction. It is essential for DNA replication and repair of damaged DNA. The chain is DNA ligase from Acidothermus cellulolyticus (strain ATCC 43068 / DSM 8971 / 11B).